Reading from the N-terminus, the 1059-residue chain is Nonsense-mediated mRNA decay factor SMG7 (1059 aa).

TPR repeat units lie at residues 149 to 183 (DQQSQNLSDKDGKELAEVQKALKSCHRCLIYLGDL) and 184 to 217 (ARYKGMYAEGDSRSRQYASASSYYLQAASLWPAS). Residues 806–817 (SHVSPAHSQSTS) show a composition bias toward polar residues. Disordered regions lie at residues 806–826 (SHVSPAHSQSTSFGGGSKWSP), 927–955 (HLGPPPGFNSVPAKLQKEPAPGSELSGNN), 987–1015 (SGKPEHLGSTGNGLNGPANFPFPGKQVPT), and 1040–1059 (STQLPEQYQGQSTWSSRHFV).

In terms of assembly, interacts with EXA1. Expressed in flowers and at lower levels in stems and leaves.

The protein resides in the cytoplasm. It is found in the P-body. In terms of biological role, plays multiple roles in growth and development. Involved in nonsense-mediated mRNA decay (NMD). May provide a link to the mRNA degradation machinery to initiate NMD and serve as an adapter for UPF proteins function. Required for meiotic progression through anaphase II of pollen mother cells. May counteract cyclin-dependent kinase (CDK) activity at the end of meiosis. May play a role in plant defense through its involvement in NMD. Together with EXA1, helps to restrict cell death induction during pathogen infection in a salicylic acid- (SA) and reactive oxygen species- (ROS) independent manner. This is Nonsense-mediated mRNA decay factor SMG7 from Arabidopsis thaliana (Mouse-ear cress).